A 204-amino-acid polypeptide reads, in one-letter code: UPF0637 protein Lm4b_01081 (204 aa).

It belongs to the UPF0637 family.

This is UPF0637 protein Lm4b_01081 from Listeria monocytogenes serotype 4b (strain CLIP80459).